We begin with the raw amino-acid sequence, 3066 residues long: Serine-protein kinase ATM (3066 aa).

An N-acetylserine modification is found at Ser-2. The residue at position 367 (Ser-367) is a Phosphoserine; by autocatalysis. Residues Leu-829–Ala-862 are disordered. Positions Asp-1380 to Pro-1389 are interaction with ABL1. Ser-1899 bears the Phosphoserine; by autocatalysis mark. An FAT domain is found at Glu-1946 to Ala-2576. Positions Thr-1973–Thr-1982 are enriched in basic and acidic residues. 2 disordered regions span residues Thr-1973–Lys-2000 and Pro-2585–Asp-2607. Residues Glu-1985–Ser-1996 are compositionally biased toward polar residues. Ser-1987 is subject to Phosphoserine; by autocatalysis. Basic and acidic residues predominate over residues Thr-2597–Asp-2607. Residues Phe-2696 to Asp-3009 enclose the PI3K/PI4K catalytic domain. Positions Leu-2702–Leu-2708 are G-loop. Residues Gly-2877–Asn-2885 are catalytic loop. The tract at residues His-2897–Ser-2921 is activation loop. Positions Asp-2986 to Asp-3007 are disordered. Polar residues predominate over residues His-2991 to Asp-3007. Residue Ser-3006 is modified to Phosphoserine. Lys-3026 bears the N6-acetyllysine mark. The region spanning Thr-3034–Val-3066 is the FATC domain. The Microbody targeting signal; atypical signature appears at Ser-3056–Leu-3058.

It belongs to the PI3/PI4-kinase family. ATM subfamily. As to quaternary structure, homodimer. Dimers or tetramers in inactive state. On DNA damage, autophosphorylation dissociates ATM into monomers rendering them catalytically active. Binds p53/TP53, ABL1, BRCA1 and TERF1. Interacts with NBN (via FxF/Y motif). Part of the BRCA1-associated genome surveillance complex (BASC), which contains BRCA1, MSH2, MSH6, MLH1, ATM, BLM, PMS2 and the RAD50-MRE11-NBN protein complex. This association could be a dynamic process changing throughout the cell cycle and within subnuclear domains. Interacts with RAD17; DNA damage promotes the association. Interacts with EEF1E1; the interaction, induced on DNA damage, up-regulates TP53. Interacts with KAT8, NABP2, ATMIN and CEP164. Interacts with AP2B1 and AP3B2; the interaction occurs in cytoplasmic vesicles. Interacts with TELO2 and TTI1. Interacts with DDX1. Interacts with BRAT1. Interacts with CYREN (via XLF motif). Interacts (via microbody targeting signal) with PEX5; promoting translocation to peroxisomes in response to reactive oxygen species (ROS). Phosphorylated by NUAK1/ARK5. Autophosphorylation on Ser-367, Ser-1899, Ser-1987 correlates with DNA damage-mediated activation of the kinase. In terms of processing, phosphorylated by NUAK1/ARK5. Autophosphorylation on Ser-367, Ser-1899, Ser-1987 correlates with DNA damage-mediated activation of the kinase. During the late stages of DNA damage response, dephosphorylated following deacetylation by SIRT7, leading to ATM deactivation. Post-translationally, acetylation, on DNA damage, is required for activation of the kinase activity, dimer-monomer transition, and subsequent autophosphorylation on Ser-1987. Acetylated in vitro by KAT5/TIP60. Deacetylated by SIRT7 during the late stages of DNA damage response, promoting ATM dephosphorylation and subsequent deactivation. As to expression, expressed in brain, skeletal muscle, testis, followed by spleen, lung, kidney, heart, liver and thymus. Ubiquitously expressed in embryonal tissues.

It localises to the nucleus. Its subcellular location is the cytoplasmic vesicle. The protein resides in the cytoplasm. It is found in the cytoskeleton. The protein localises to the microtubule organizing center. It localises to the centrosome. Its subcellular location is the peroxisome matrix. The enzyme catalyses L-seryl-[protein] + ATP = O-phospho-L-seryl-[protein] + ADP + H(+). The catalysed reaction is L-threonyl-[protein] + ATP = O-phospho-L-threonyl-[protein] + ADP + H(+). Activated by the MRN (MRE11-RAD50-NBS1) complex in response to DNA double strand breaks (DSBs), which recruits ATM to DSBs and promotes its activation. Inhibited by wortmannin. Its function is as follows. Serine/threonine protein kinase which activates checkpoint signaling upon double strand breaks (DSBs), apoptosis and genotoxic stresses such as ionizing ultraviolet A light (UVA), thereby acting as a DNA damage sensor. Recognizes the substrate consensus sequence [ST]-Q. Phosphorylates 'Ser-139' of histone variant H2AX at double strand breaks (DSBs), thereby regulating DNA damage response mechanism. Also plays a role in pre-B cell allelic exclusion, a process leading to expression of a single immunoglobulin heavy chain allele to enforce clonality and monospecific recognition by the B-cell antigen receptor (BCR) expressed on individual B-lymphocytes. After the introduction of DNA breaks by the RAG complex on one immunoglobulin allele, acts by mediating a repositioning of the second allele to pericentromeric heterochromatin, preventing accessibility to the RAG complex and recombination of the second allele. Also involved in signal transduction and cell cycle control. May function as a tumor suppressor. Necessary for activation of ABL1 and SAPK. Phosphorylates DYRK2, CHEK2, p53/TP53, FBXW7, FANCD2, NFKBIA, BRCA1, CREBBP/CBP, RBBP8/CTIP, FBXO46, MRE11, nibrin (NBN), RAD50, RAD17, PELI1, TERF1, UFL1, RAD9, UBQLN4 and DCLRE1C. May play a role in vesicle and/or protein transport. Could play a role in T-cell development, gonad and neurological function. Binds DNA ends. Plays a role in replication-dependent histone mRNA degradation. Phosphorylation of DYRK2 in nucleus in response to genotoxic stress prevents its MDM2-mediated ubiquitination and subsequent proteasome degradation. Phosphorylates ATF2 which stimulates its function in DNA damage response. Phosphorylates ERCC6 which is essential for its chromatin remodeling activity at DNA double-strand breaks. Phosphorylates TTC5/STRAP at 'Ser-203' in the cytoplasm in response to DNA damage, which promotes TTC5/STRAP nuclear localization. Also involved in pexophagy by mediating phosphorylation of PEX5: translocated to peroxisomes in response to reactive oxygen species (ROS), and catalyzes phosphorylation of PEX5, promoting PEX5 ubiquitination and induction of pexophagy. The sequence is that of Serine-protein kinase ATM (Atm) from Mus musculus (Mouse).